We begin with the raw amino-acid sequence, 261 residues long: Protein FAM216A (261 aa).

Positions 1 to 52 are disordered; the sequence is MPSRCPGVAGPPALARTEGSEGSAGQSYHQNSKGTGEQHKAERIKEGHRMSS. A compositionally biased stretch (polar residues) spans 23-35; the sequence is SAGQSYHQNSKGT. Positions 36–49 are enriched in basic and acidic residues; it reads GEQHKAERIKEGHR.

Belongs to the FAM216 family.

The sequence is that of Protein FAM216A (Fam216a) from Rattus norvegicus (Rat).